The primary structure comprises 396 residues: 8-amino-7-oxononanoate synthase (396 aa).

R31 lines the substrate pocket. G118–Y119 contacts pyridoxal 5'-phosphate. H143 contacts substrate. Pyridoxal 5'-phosphate is bound by residues S189, H217, and T245. Residue K248 is modified to N6-(pyridoxal phosphate)lysine. T362 contacts substrate.

Belongs to the class-II pyridoxal-phosphate-dependent aminotransferase family. BioF subfamily. In terms of assembly, homodimer. It depends on pyridoxal 5'-phosphate as a cofactor.

The catalysed reaction is 6-carboxyhexanoyl-[ACP] + L-alanine + H(+) = (8S)-8-amino-7-oxononanoate + holo-[ACP] + CO2. Its pathway is cofactor biosynthesis; biotin biosynthesis. Catalyzes the decarboxylative condensation of pimeloyl-[acyl-carrier protein] and L-alanine to produce 8-amino-7-oxononanoate (AON), [acyl-carrier protein], and carbon dioxide. This is 8-amino-7-oxononanoate synthase from Methylobacillus flagellatus (strain ATCC 51484 / DSM 6875 / VKM B-1610 / KT).